Consider the following 2511-residue polypeptide: Fatty acid synthase (2511 aa).

Met-1 is modified (N-acetylmethionine). Residues 1–406 enclose the Ketosynthase family 3 (KS3) domain; sequence MEEVVIAGMS…GSNVHIILRP (406 aa). Position 63 is a phosphoserine (Ser-63). Lys-70 bears the N6-acetyllysine mark. Cys-161 (for beta-ketoacyl synthase activity) is an active-site residue. At Ser-207 the chain carries Phosphoserine. The For beta-ketoacyl synthase activity role is filled by His-293. Lys-298 bears the N6-acetyllysine mark. His-331 functions as the For beta-ketoacyl synthase activity in the catalytic mechanism. The acyl and malonyl transferases stretch occupies residues 429–817; that stretch reads RTPEAVQKLL…IDANPNALFP (389 aa). An N6-acetyllysine mark is found at Lys-436 and Lys-528. Ser-581 serves as the catalytic For malonyltransferase activity. Residues 647-648 and Phe-671 each bind an acyl-CoA; that span reads DT. Lys-673 carries the post-translational modification N6-acetyllysine. Ser-725 bears the Phosphoserine mark. An acyl-CoA is bound at residue Arg-773. Positions 838–966 are N-terminal hotdog fold; that stretch reads HSLAWDVPAA…KVYQWDDPDP (129 aa). The region spanning 838 to 1108 is the PKS/mFAS DH domain; sequence HSLAWDVPAA…TESAPRRQQE (271 aa). Catalysis depends on His-878, which acts as the Proton acceptor; for dehydratase activity. Residues 981 to 1108 are C-terminal hotdog fold; the sequence is EPLFLAQAEV…TESAPRRQQE (128 aa). Lys-992 carries the N6-acetyllysine modification. Asp-1031 acts as the Proton donor; for dehydratase activity in catalysis. Phosphoserine occurs at positions 1174 and 1411. Position 1471 is an S-nitrosocysteine (Cys-1471). Phosphoserine is present on residues Ser-1584 and Ser-1594. An enoyl reductase region spans residues 1635 to 1863; it reads DVPSNWTLEE…VQVLAEEPEA (229 aa). Position 1671-1688 (1671-1688) interacts with NADP(+); sequence LLIHSGSGGVGQAAIAIA. The residue at position 1704 (Lys-1704) is an N6-(pyridoxal phosphate)lysine; alternate. Lys-1704 is modified (N6-acetyllysine; alternate). N6-acetyllysine occurs at positions 1771 and 1847. A beta-ketoacyl reductase region spans residues 1864 to 2118; it reads VLKGAKPKLM…FVLAEKAAAY (255 aa). 1886-1901 lines the NADP(+) pocket; it reads SYIIAGGLGGFGLELA. Lys-1995 carries the N6-acetyllysine modification. Position 2091 is an S-nitrosocysteine (Cys-2091). The 78-residue stretch at 2121–2198 folds into the Carrier domain; the sequence is RDSQRDLVEA…ELSSKADEAS (78 aa). Ser-2156 carries the O-(pantetheine 4'-phosphoryl)serine; alternate modification. Position 2156 is a phosphoserine; alternate (Ser-2156). Ser-2198 carries the post-translational modification Phosphoserine. Phosphothreonine is present on residues Thr-2204 and Thr-2215. The segment at 2207 to 2511 is thioesterase; the sequence is EDGLAQQQTQ…AEPRVSVREG (305 aa). Phosphoserine is present on Ser-2236. Ser-2308 acts as the For thioesterase activity in catalysis. Lys-2391 bears the N6-acetyllysine mark. Residue Lys-2449 forms a Glycyl lysine isopeptide (Lys-Gly) (interchain with G-Cter in SUMO2) linkage. His-2481 serves as the catalytic For thioesterase activity.

Homodimer which is arranged in a head to tail fashion. Interacts with CEACAM1; this interaction is insulin and phosphorylation-dependent; reduces fatty-acid synthase activity. In terms of processing, S-nitrosylation of Fatty acid synthase at cysteine residues Cys-1471 or Cys-2091 is important for the enzyme dimerization. In adipocytes, S-nitrosylation of Fatty acid synthase occurs under physiological conditions and gradually increases during adipogenesis. In terms of tissue distribution, ubiquitous. Prominent expression in brain, lung, liver and mammary gland.

The protein resides in the cytoplasm. It is found in the melanosome. It carries out the reaction acetyl-CoA + n malonyl-CoA + 2n NADPH + 2n H(+) = a long-chain fatty acid + (n+1) CoA + n CO2 + 2n NADP(+).. The catalysed reaction is holo-[ACP] + acetyl-CoA = acetyl-[ACP] + CoA. The enzyme catalyses holo-[ACP] + malonyl-CoA = malonyl-[ACP] + CoA. It catalyses the reaction a fatty acyl-[ACP] + malonyl-[ACP] + H(+) = a 3-oxoacyl-[ACP] + holo-[ACP] + CO2. It carries out the reaction a (3R)-hydroxyacyl-[ACP] + NADP(+) = a 3-oxoacyl-[ACP] + NADPH + H(+). The catalysed reaction is a (3R)-hydroxyacyl-[ACP] = a (2E)-enoyl-[ACP] + H2O. The enzyme catalyses a 2,3-saturated acyl-[ACP] + NADP(+) = a (2E)-enoyl-[ACP] + NADPH + H(+). It catalyses the reaction hexadecanoyl-[ACP] + H2O = hexadecanoate + holo-[ACP] + H(+). It carries out the reaction acetyl-[ACP] + malonyl-[ACP] + H(+) = 3-oxobutanoyl-[ACP] + holo-[ACP] + CO2. The catalysed reaction is 3-oxobutanoyl-[ACP] + NADPH + H(+) = (3R)-hydroxybutanoyl-[ACP] + NADP(+). The enzyme catalyses (3R)-hydroxybutanoyl-[ACP] = (2E)-butenoyl-[ACP] + H2O. It catalyses the reaction (2E)-butenoyl-[ACP] + NADPH + H(+) = butanoyl-[ACP] + NADP(+). It carries out the reaction butanoyl-[ACP] + malonyl-[ACP] + H(+) = 3-oxohexanoyl-[ACP] + holo-[ACP] + CO2. The catalysed reaction is 3-oxohexanoyl-[ACP] + NADPH + H(+) = (3R)-hydroxyhexanoyl-[ACP] + NADP(+). The enzyme catalyses (3R)-hydroxyhexanoyl-[ACP] = (2E)-hexenoyl-[ACP] + H2O. It catalyses the reaction (2E)-hexenoyl-[ACP] + NADPH + H(+) = hexanoyl-[ACP] + NADP(+). It carries out the reaction hexanoyl-[ACP] + malonyl-[ACP] + H(+) = 3-oxooctanoyl-[ACP] + holo-[ACP] + CO2. The catalysed reaction is 3-oxooctanoyl-[ACP] + NADPH + H(+) = (3R)-hydroxyoctanoyl-[ACP] + NADP(+). The enzyme catalyses (3R)-hydroxyoctanoyl-[ACP] = (2E)-octenoyl-[ACP] + H2O. It catalyses the reaction (2E)-octenoyl-[ACP] + NADPH + H(+) = octanoyl-[ACP] + NADP(+). It carries out the reaction octanoyl-[ACP] + malonyl-[ACP] + H(+) = 3-oxodecanoyl-[ACP] + holo-[ACP] + CO2. The catalysed reaction is 3-oxodecanoyl-[ACP] + NADPH + H(+) = (3R)-hydroxydecanoyl-[ACP] + NADP(+). The enzyme catalyses (3R)-hydroxydecanoyl-[ACP] = (2E)-decenoyl-[ACP] + H2O. It catalyses the reaction (2E)-decenoyl-[ACP] + NADPH + H(+) = decanoyl-[ACP] + NADP(+). It carries out the reaction decanoyl-[ACP] + malonyl-[ACP] + H(+) = 3-oxododecanoyl-[ACP] + holo-[ACP] + CO2. The catalysed reaction is 3-oxododecanoyl-[ACP] + NADPH + H(+) = (3R)-hydroxydodecanoyl-[ACP] + NADP(+). The enzyme catalyses (3R)-hydroxydodecanoyl-[ACP] = (2E)-dodecenoyl-[ACP] + H2O. It catalyses the reaction (2E)-dodecenoyl-[ACP] + NADPH + H(+) = dodecanoyl-[ACP] + NADP(+). It carries out the reaction dodecanoyl-[ACP] + malonyl-[ACP] + H(+) = 3-oxotetradecanoyl-[ACP] + holo-[ACP] + CO2. The catalysed reaction is 3-oxotetradecanoyl-[ACP] + NADPH + H(+) = (3R)-hydroxytetradecanoyl-[ACP] + NADP(+). The enzyme catalyses (3R)-hydroxytetradecanoyl-[ACP] = (2E)-tetradecenoyl-[ACP] + H2O. It catalyses the reaction (2E)-tetradecenoyl-[ACP] + NADPH + H(+) = tetradecanoyl-[ACP] + NADP(+). It carries out the reaction tetradecanoyl-[ACP] + malonyl-[ACP] + H(+) = 3-oxohexadecanoyl-[ACP] + holo-[ACP] + CO2. The catalysed reaction is 3-oxohexadecanoyl-[ACP] + NADPH + H(+) = (3R)-hydroxyhexadecanoyl-[ACP] + NADP(+). The enzyme catalyses (3R)-hydroxyhexadecanoyl-[ACP] = (2E)-hexadecenoyl-[ACP] + H2O. It catalyses the reaction (2E)-hexadecenoyl-[ACP] + NADPH + H(+) = hexadecanoyl-[ACP] + NADP(+). It carries out the reaction hexadecanoyl-[ACP] + malonyl-[ACP] + H(+) = 3-oxooctadecanoyl-[ACP] + holo-[ACP] + CO2. The catalysed reaction is 3-oxooctadecanoyl-[ACP] + NADPH + H(+) = (3R)-hydroxyoctadecanoyl-[ACP] + NADP(+). The enzyme catalyses (3R)-hydroxyoctadecanoyl-[ACP] = (2E)-octadecenoyl-[ACP] + H2O. It catalyses the reaction (2E)-octadecenoyl-[ACP] + NADPH + H(+) = octadecanoyl-[ACP] + NADP(+). It carries out the reaction tetradecanoyl-[ACP] + H2O = tetradecanoate + holo-[ACP] + H(+). The catalysed reaction is octadecanoyl-[ACP] + H2O = octadecanoate + holo-[ACP] + H(+). The protein operates within lipid metabolism; fatty acid biosynthesis. Activated by S-nitrosylation which promotes enzyme dimerization. Cerulenin, a potent non-competitive pharmacological inhibitor of FAS, binds covalently to the active site of the condensing enzyme region, inactivating a key enzyme step in fatty acid synthesis. Functionally, fatty acid synthetase is a multifunctional enzyme that catalyzes the de novo biosynthesis of long-chain saturated fatty acids starting from acetyl-CoA and malonyl-CoA in the presence of NADPH. This multifunctional protein contains 7 catalytic activities and a site for the binding of the prosthetic group 4'-phosphopantetheine of the acyl carrier protein ([ACP]) domain. In terms of biological role, (Microbial infection) Fatty acid synthetase activity is required for SARS coronavirus-2/SARS-CoV-2 replication. This chain is Fatty acid synthase (FASN), found in Homo sapiens (Human).